A 273-amino-acid chain; its full sequence is Large ribosomal subunit protein uL2cz/uL2cy (273 aa).

Disordered stretches follow at residues 1–23 (MAIH…SQVK) and 223–273 (NPVD…RRSK).

Belongs to the universal ribosomal protein uL2 family. As to quaternary structure, part of the 50S ribosomal subunit.

It is found in the plastid. The protein localises to the chloroplast. This is Large ribosomal subunit protein uL2cz/uL2cy (rpl2-A) from Oenothera argillicola (Appalachian evening primrose).